The sequence spans 255 residues: 5'-nucleotidase SurE (255 aa).

Positions 16, 17, 47, and 100 each coordinate a divalent metal cation.

It belongs to the SurE nucleotidase family. Requires a divalent metal cation as cofactor.

It localises to the cytoplasm. The catalysed reaction is a ribonucleoside 5'-phosphate + H2O = a ribonucleoside + phosphate. Its function is as follows. Nucleotidase that shows phosphatase activity on nucleoside 5'-monophosphates. This is 5'-nucleotidase SurE from Vibrio vulnificus (strain YJ016).